A 176-amino-acid chain; its full sequence is NAD(P)H-quinone oxidoreductase subunit 6, chloroplastic (176 aa).

Helical transmembrane passes span 10–30, 32–52, 61–81, 92–112, and 152–172; these read FLLV…VLLT, PIFS…FFSL, AQLL…VMFM, LWTV…ISLI, and FFLP…GAIA.

The protein belongs to the complex I subunit 6 family. As to quaternary structure, NDH is composed of at least 16 different subunits, 5 of which are encoded in the nucleus.

The protein localises to the plastid. Its subcellular location is the chloroplast thylakoid membrane. It carries out the reaction a plastoquinone + NADH + (n+1) H(+)(in) = a plastoquinol + NAD(+) + n H(+)(out). It catalyses the reaction a plastoquinone + NADPH + (n+1) H(+)(in) = a plastoquinol + NADP(+) + n H(+)(out). Functionally, NDH shuttles electrons from NAD(P)H:plastoquinone, via FMN and iron-sulfur (Fe-S) centers, to quinones in the photosynthetic chain and possibly in a chloroplast respiratory chain. The immediate electron acceptor for the enzyme in this species is believed to be plastoquinone. Couples the redox reaction to proton translocation, and thus conserves the redox energy in a proton gradient. This is NAD(P)H-quinone oxidoreductase subunit 6, chloroplastic (ndhG) from Oenothera argillicola (Appalachian evening primrose).